A 372-amino-acid chain; its full sequence is MSNQHILLTSNLLPVGSNISTWWNFGSMLLTCLILQITTGFFLAIHYTANINLAFSSVIHITRDVPHGWIMQNLHAIGASMFFICIYIHIARGLYYGLYLNKEVWLSGTALLILLMATAFFGYVLPWGQMSFWAATVITNLLTAIPYLGSALTTWLWGGFSINDPTLTRFFALHFILPFTIISMSSIHIILLHNEGSNNPLGTNPDIDKIPFHPYHSYKDMLMITIMITFMLLILSFSPDLMNDPENYSKANPLITPQHIKPEWYFLFAYGILRSIPNKLGGTLALFMSIAILMTAPFTHTSYTRSMSFRPLTQTMFWILIATFITITWTATKPVEPPFISISQVTSIIYFSFFIINPLLGWVENKLSTLNN.

The next 4 helical transmembrane spans lie at 25 to 45 (FGSM…FLAI), 69 to 90 (WIMQ…YIHI), 105 to 125 (WLSG…GYVL), and 170 to 190 (FFAL…IHII). Residues histidine 75 and histidine 89 each coordinate heme b. 2 residues coordinate heme b: histidine 174 and histidine 188. A ubiquinone is bound at residue histidine 193. The next 4 helical transmembrane spans lie at 218 to 238 (YKDM…LSFS), 280 to 300 (LGGT…PFTH), 312 to 332 (LTQT…WTAT), and 339 to 358 (FISI…IINP).

The protein belongs to the cytochrome b family. As to quaternary structure, the cytochrome bc1 complex contains 3 respiratory subunits (MT-CYB, CYC1 and UQCRFS1), 2 core proteins (UQCRC1 and UQCRC2) and probably 6 low-molecular weight proteins. Heme b serves as cofactor.

The protein localises to the mitochondrion inner membrane. Its function is as follows. Component of the ubiquinol-cytochrome c reductase complex (complex III or cytochrome b-c1 complex) that is part of the mitochondrial respiratory chain. The b-c1 complex mediates electron transfer from ubiquinol to cytochrome c. Contributes to the generation of a proton gradient across the mitochondrial membrane that is then used for ATP synthesis. This is Cytochrome b (MT-CYB) from Dendroaspis polylepis polylepis (Black mamba).